We begin with the raw amino-acid sequence, 485 residues long: E3 ubiquitin-protein ligase TRIM34A (485 aa).

The RING-type zinc finger occupies 15 to 59; that stretch reads CPVCQELLTKALSLGCGHRVCQACLITKKNAVINPREKSSCPVCG. A B box-type zinc finger spans residues 91–132; the sequence is TKRDLCVHHGEKLLLFCKEDKKAICWVCERSQEHRGHHTFLW. The Zn(2+) site is built by cysteine 96, histidine 99, cysteine 118, and histidine 124. The stretch at 136–170 forms a coiled coil; the sequence is VRECQENLQKALTRLRKEQEKVETLEADIKEDRLS. The B30.2/SPRY domain occupies 282-485; it reads LSGMLQKFRE…APMTLCPLNS (204 aa).

This sequence belongs to the TRIM/RBCC family. In terms of assembly, homotrimer. Interacts (via B-box and SPRY domain) with TRIM5.

The protein localises to the cytoplasm. The protein resides in the mitochondrion. It carries out the reaction S-ubiquitinyl-[E2 ubiquitin-conjugating enzyme]-L-cysteine + [acceptor protein]-L-lysine = [E2 ubiquitin-conjugating enzyme]-L-cysteine + N(6)-ubiquitinyl-[acceptor protein]-L-lysine.. It functions in the pathway protein modification; protein ubiquitination. In terms of biological role, functions as antiviral protein and contributes to the defense against retroviral infections. Acts as a capsid-specific restriction factor with the help of TRIM5 and prevents infection from non-host-adapted retroviruses. During influenza A virus infection, promotes programmed cell death by targeting ZBP1 for 'Lys-63'-linked polyubiquitination. In turn, promotes ZBP1 recruitment of RIPK3 to mediate virus-induced programmed necrosis. Negatively regulates the function of mitochondria by enhancing mitochondrial depolarization leading to cytochrome c release and mitochondria-dependent apoptosis. Also promotes the formation of multinucleated giant cells by means of cell fusion and phagocytosis in epithelial cells. Plays an essential role in sustaining the integrity of the inner mucus layer in the colon by controlling the exocytosis of the major component of colonic mucus MUC2 from colonic goblet cells. The polypeptide is E3 ubiquitin-protein ligase TRIM34A (Mus musculus (Mouse)).